The primary structure comprises 72 residues: Translation initiation factor IF-1 (72 aa).

Residues Met-1–Lys-72 form the S1-like domain.

Belongs to the IF-1 family. Component of the 30S ribosomal translation pre-initiation complex which assembles on the 30S ribosome in the order IF-2 and IF-3, IF-1 and N-formylmethionyl-tRNA(fMet); mRNA recruitment can occur at any time during PIC assembly.

Its subcellular location is the cytoplasm. One of the essential components for the initiation of protein synthesis. Stabilizes the binding of IF-2 and IF-3 on the 30S subunit to which N-formylmethionyl-tRNA(fMet) subsequently binds. Helps modulate mRNA selection, yielding the 30S pre-initiation complex (PIC). Upon addition of the 50S ribosomal subunit IF-1, IF-2 and IF-3 are released leaving the mature 70S translation initiation complex. This chain is Translation initiation factor IF-1, found in Geotalea uraniireducens (strain Rf4) (Geobacter uraniireducens).